A 1793-amino-acid chain; its full sequence is Brefeldin A-inhibited guanine nucleotide-exchange protein 2 (1793 aa).

Ala-2 bears the N-acetylalanine mark. Disordered regions lie at residues 45–71, 266–299, and 579–606; these read NSLQ…PGPL, TMSG…LLDS, and GSPQ…GGTS. Positions 55–66 are enriched in low complexity; it reads SSAATDSESESS. Positions 270–281 are enriched in gly residues; the sequence is SGSGSGSGGQDG. Composition is skewed to polar residues over residues 284 to 294 and 594 to 605; these read GTTTVETTNPT and GSDTYSESSGGT. A Phosphoserine modification is found at Ser-595. Positions 610 to 797 constitute an SEC7 domain; the sequence is AIEQRRAYKL…RSLYERITKH (188 aa). Glu-712 is an active-site residue. Residues 1311–1327 are compositionally biased toward polar residues; it reads NKYKGTSGKIPQSSLHS. The interval 1311-1333 is disordered; the sequence is NKYKGTSGKIPQSSLHSGKSGKQ.

As to quaternary structure, homodimer.

The protein resides in the cytoplasm. The protein localises to the cytosol. Its subcellular location is the membrane. With respect to regulation, inhibited by brefeldin A. Activates the ARF proteins by exchanging bound GDP for free GTP. Plays a role in vesicular protein sorting. The chain is Brefeldin A-inhibited guanine nucleotide-exchange protein 2 (BIG2) from Arabidopsis thaliana (Mouse-ear cress).